The following is a 403-amino-acid chain: CCA-adding enzyme (403 aa).

ATP contacts are provided by Gly-32 and Arg-35. The CTP site is built by Gly-32 and Arg-35. Residues Asp-45 and Asp-47 each contribute to the Mg(2+) site. Positions 116, 159, 162, 165, and 168 each coordinate ATP. Positions 116, 159, 162, 165, and 168 each coordinate CTP.

Belongs to the tRNA nucleotidyltransferase/poly(A) polymerase family. Bacterial CCA-adding enzyme type 3 subfamily. Homodimer. The cofactor is Mg(2+).

It carries out the reaction a tRNA precursor + 2 CTP + ATP = a tRNA with a 3' CCA end + 3 diphosphate. The catalysed reaction is a tRNA with a 3' CCA end + 2 CTP + ATP = a tRNA with a 3' CCACCA end + 3 diphosphate. In terms of biological role, catalyzes the addition and repair of the essential 3'-terminal CCA sequence in tRNAs without using a nucleic acid template. Adds these three nucleotides in the order of C, C, and A to the tRNA nucleotide-73, using CTP and ATP as substrates and producing inorganic pyrophosphate. tRNA 3'-terminal CCA addition is required both for tRNA processing and repair. Also involved in tRNA surveillance by mediating tandem CCA addition to generate a CCACCA at the 3' terminus of unstable tRNAs. While stable tRNAs receive only 3'-terminal CCA, unstable tRNAs are marked with CCACCA and rapidly degraded. In Leuconostoc citreum (strain KM20), this protein is CCA-adding enzyme.